Consider the following 231-residue polypeptide: Phosphoglycolate phosphatase, plasmid (231 aa).

The active-site Nucleophile is the Asp14. Mg(2+) is bound by residues Asp14, Asp16, and Asp175.

Belongs to the HAD-like hydrolase superfamily. CbbY/CbbZ/Gph/YieH family. In terms of assembly, homotrimer. Requires Mg(2+) as cofactor.

It carries out the reaction 2-phosphoglycolate + H2O = glycolate + phosphate. It participates in organic acid metabolism; glycolate biosynthesis; glycolate from 2-phosphoglycolate: step 1/1. In terms of biological role, specifically catalyzes the dephosphorylation of 2-phosphoglycolate. Is involved in the dissimilation of the intracellular 2-phosphoglycolate formed during the DNA repair of 3'-phosphoglycolate ends, a major class of DNA lesions induced by oxidative stress. The polypeptide is Phosphoglycolate phosphatase, plasmid (cbbZP) (Cupriavidus necator (strain ATCC 17699 / DSM 428 / KCTC 22496 / NCIMB 10442 / H16 / Stanier 337) (Ralstonia eutropha)).